Consider the following 179-residue polypeptide: Ribulose bisphosphate carboxylase small subunit, chloroplastic 3 (179 aa).

A chloroplast-targeting transit peptide spans 1 to 58; sequence MASSATMLSSVATAARAAPAQASMVAPFVGLKSASAFPVTQKPATGLSTLPSNGGRVQ.

Belongs to the RuBisCO small chain family. As to quaternary structure, heterohexadecamer of 8 large and 8 small subunits.

It localises to the plastid. The protein localises to the chloroplast. Functionally, ruBisCO catalyzes two reactions: the carboxylation of D-ribulose 1,5-bisphosphate, the primary event in carbon dioxide fixation, as well as the oxidative fragmentation of the pentose substrate. Both reactions occur simultaneously and in competition at the same active site. Although the small subunit is not catalytic it is essential for maximal activity. The chain is Ribulose bisphosphate carboxylase small subunit, chloroplastic 3 from Fritillaria agrestis (Stinkbells).